The following is a 319-amino-acid chain: Cytochrome c biogenesis protein CcsA (319 aa).

A run of 8 helical transmembrane segments spans residues 14–34 (AFGG…FPGI), 36–56 (GLNR…TLTL), 69–89 (SNLY…HLFI), 97–117 (LIGA…SLAL), 142–162 (IMML…LFLI), 227–247 (TIGL…VWAN), 254–274 (WSWD…AAYL), and 288–308 (AILA…VNFL).

The protein belongs to the CcmF/CycK/Ccl1/NrfE/CcsA family. May interact with Ccs1.

The protein localises to the plastid. It localises to the chloroplast thylakoid membrane. Its function is as follows. Required during biogenesis of c-type cytochromes (cytochrome c6 and cytochrome f) at the step of heme attachment. The protein is Cytochrome c biogenesis protein CcsA of Pyropia yezoensis (Susabi-nori).